A 170-amino-acid polypeptide reads, in one-letter code: Translationally-controlled tumor protein homolog (170 aa).

One can recognise a TCTP domain in the interval 1-170 (MLIYSDIITG…WKHGLKETKV (170 aa)).

It belongs to the TCTP family.

The protein resides in the cytoplasm. It localises to the cytoskeleton. In terms of biological role, involved in protein synthesis. Involved in microtubule stabilization. This Neurospora crassa (strain ATCC 24698 / 74-OR23-1A / CBS 708.71 / DSM 1257 / FGSC 987) protein is Translationally-controlled tumor protein homolog.